A 466-amino-acid chain; its full sequence is 3-isopropylmalate dehydratase large subunit (466 aa).

Residues cysteine 349, cysteine 410, and cysteine 413 each coordinate [4Fe-4S] cluster.

It belongs to the aconitase/IPM isomerase family. LeuC type 1 subfamily. Heterodimer of LeuC and LeuD. The cofactor is [4Fe-4S] cluster.

The catalysed reaction is (2R,3S)-3-isopropylmalate = (2S)-2-isopropylmalate. It participates in amino-acid biosynthesis; L-leucine biosynthesis; L-leucine from 3-methyl-2-oxobutanoate: step 2/4. Catalyzes the isomerization between 2-isopropylmalate and 3-isopropylmalate, via the formation of 2-isopropylmaleate. The sequence is that of 3-isopropylmalate dehydratase large subunit from Vesicomyosocius okutanii subsp. Calyptogena okutanii (strain HA).